Reading from the N-terminus, the 722-residue chain is Methionine--tRNA ligase (722 aa).

A 'HIGH' region motif is present at residues 11 to 21 (PYANGPIHAGH). Residues Cys143, Cys146, Cys156, and Cys159 each contribute to the Zn(2+) site. Residues 344–348 (KFSTS) carry the 'KMSKS' region motif. Thr347 contributes to the ATP binding site. The tRNA-binding domain maps to 622–722 (DFAKLDLRVG…KEVKLGAKVR (101 aa)).

The protein belongs to the class-I aminoacyl-tRNA synthetase family. MetG type 1 subfamily. In terms of assembly, homodimer. Zn(2+) is required as a cofactor.

The protein localises to the cytoplasm. It carries out the reaction tRNA(Met) + L-methionine + ATP = L-methionyl-tRNA(Met) + AMP + diphosphate. Is required not only for elongation of protein synthesis but also for the initiation of all mRNA translation through initiator tRNA(fMet) aminoacylation. The chain is Methionine--tRNA ligase from Pyrococcus abyssi (strain GE5 / Orsay).